We begin with the raw amino-acid sequence, 570 residues long: Sulfite reductase [NADPH] hemoprotein beta-component (570 aa).

[4Fe-4S] cluster is bound by residues C434, C440, C479, and C483. C483 serves as a coordination point for siroheme.

This sequence belongs to the nitrite and sulfite reductase 4Fe-4S domain family. Alpha(8)-beta(8). The alpha component is a flavoprotein, the beta component is a hemoprotein. Siroheme serves as cofactor. [4Fe-4S] cluster is required as a cofactor.

It carries out the reaction hydrogen sulfide + 3 NADP(+) + 3 H2O = sulfite + 3 NADPH + 4 H(+). It participates in sulfur metabolism; hydrogen sulfide biosynthesis; hydrogen sulfide from sulfite (NADPH route): step 1/1. Functionally, component of the sulfite reductase complex that catalyzes the 6-electron reduction of sulfite to sulfide. This is one of several activities required for the biosynthesis of L-cysteine from sulfate. The polypeptide is Sulfite reductase [NADPH] hemoprotein beta-component (Salmonella arizonae (strain ATCC BAA-731 / CDC346-86 / RSK2980)).